Consider the following 454-residue polypeptide: Bifunctional protein GlmU (454 aa).

A pyrophosphorylase region spans residues 1–226; the sequence is MALNVVILAA…AIEVEGANNR (226 aa). Residues 8–11, lysine 22, glutamine 73, 78–79, 100–102, glycine 137, glutamate 151, asparagine 166, and asparagine 224 contribute to the UDP-N-acetyl-alpha-D-glucosamine site; these read LAAG, GT, and YGD. Aspartate 102 serves as a coordination point for Mg(2+). Position 224 (asparagine 224) interacts with Mg(2+). A linker region spans residues 227–247; sequence VQLAQLERAYQAREAEKLMLA. Residues 248 to 454 are N-acetyltransferase; that stretch reads GANLRDPHRI…DWKRPVKIKK (207 aa). Arginine 330 and lysine 348 together coordinate UDP-N-acetyl-alpha-D-glucosamine. Catalysis depends on histidine 360, which acts as the Proton acceptor. UDP-N-acetyl-alpha-D-glucosamine-binding residues include tyrosine 363 and asparagine 374. Acetyl-CoA is bound by residues alanine 377, 383 to 384, serine 402, alanine 420, and arginine 437; that span reads NY.

The protein in the N-terminal section; belongs to the N-acetylglucosamine-1-phosphate uridyltransferase family. This sequence in the C-terminal section; belongs to the transferase hexapeptide repeat family. In terms of assembly, homotrimer. Mg(2+) is required as a cofactor.

The protein resides in the cytoplasm. The catalysed reaction is alpha-D-glucosamine 1-phosphate + acetyl-CoA = N-acetyl-alpha-D-glucosamine 1-phosphate + CoA + H(+). It carries out the reaction N-acetyl-alpha-D-glucosamine 1-phosphate + UTP + H(+) = UDP-N-acetyl-alpha-D-glucosamine + diphosphate. It participates in nucleotide-sugar biosynthesis; UDP-N-acetyl-alpha-D-glucosamine biosynthesis; N-acetyl-alpha-D-glucosamine 1-phosphate from alpha-D-glucosamine 6-phosphate (route II): step 2/2. Its pathway is nucleotide-sugar biosynthesis; UDP-N-acetyl-alpha-D-glucosamine biosynthesis; UDP-N-acetyl-alpha-D-glucosamine from N-acetyl-alpha-D-glucosamine 1-phosphate: step 1/1. It functions in the pathway bacterial outer membrane biogenesis; LPS lipid A biosynthesis. Functionally, catalyzes the last two sequential reactions in the de novo biosynthetic pathway for UDP-N-acetylglucosamine (UDP-GlcNAc). The C-terminal domain catalyzes the transfer of acetyl group from acetyl coenzyme A to glucosamine-1-phosphate (GlcN-1-P) to produce N-acetylglucosamine-1-phosphate (GlcNAc-1-P), which is converted into UDP-GlcNAc by the transfer of uridine 5-monophosphate (from uridine 5-triphosphate), a reaction catalyzed by the N-terminal domain. The polypeptide is Bifunctional protein GlmU (Shewanella putrefaciens (strain CN-32 / ATCC BAA-453)).